Consider the following 160-residue polypeptide: Large ribosomal subunit protein uL11 (160 aa).

The protein belongs to the universal ribosomal protein uL11 family. Part of the ribosomal stalk of the 50S ribosomal subunit. Interacts with L10 and the large rRNA to form the base of the stalk. L10 forms an elongated spine to which L12 dimers bind in a sequential fashion forming a multimeric L10(L12)X complex.

In terms of biological role, forms part of the ribosomal stalk which helps the ribosome interact with GTP-bound translation factors. This is Large ribosomal subunit protein uL11 from Methanothermobacter thermautotrophicus (strain ATCC 29096 / DSM 1053 / JCM 10044 / NBRC 100330 / Delta H) (Methanobacterium thermoautotrophicum).